The primary structure comprises 488 residues: UDP-N-acetylmuramate--L-alanine ligase (488 aa).

122-128 lines the ATP pocket; sequence GTHGKTT.

The protein belongs to the MurCDEF family.

The protein localises to the cytoplasm. The catalysed reaction is UDP-N-acetyl-alpha-D-muramate + L-alanine + ATP = UDP-N-acetyl-alpha-D-muramoyl-L-alanine + ADP + phosphate + H(+). The protein operates within cell wall biogenesis; peptidoglycan biosynthesis. Its function is as follows. Cell wall formation. This chain is UDP-N-acetylmuramate--L-alanine ligase, found in Mycobacterium ulcerans (strain Agy99).